The following is a 67-amino-acid chain: Cold shock protein ScoF (67 aa).

The region spanning 4–64 is the CSD domain; the sequence is GTVKWFNSEK…GQKGPQAENI (61 aa).

The protein localises to the cytoplasm. In Streptomyces coelicolor (strain ATCC BAA-471 / A3(2) / M145), this protein is Cold shock protein ScoF (scoF).